The primary structure comprises 862 residues: Interleukin-12 receptor subunit beta-2 (862 aa).

Positions methionine 1 to alanine 23 are cleaved as a signal peptide. Residues lysine 24 to asparagine 622 lie on the Extracellular side of the membrane. N-linked (GlcNAc...) asparagine glycans are attached at residues asparagine 48, asparagine 129, asparagine 166, asparagine 195, and asparagine 271. Fibronectin type-III domains are found at residues glutamine 126–isoleucine 221, proline 226–glutamate 319, glutamate 320–alanine 419, alanine 423–alanine 520, and proline 521–lysine 620. The WSXWS motif signature appears at tryptophan 305 to serine 309. N-linked (GlcNAc...) asparagine glycans are attached at residues asparagine 347, asparagine 376, and asparagine 480. A helical transmembrane segment spans residues tryptophan 623–threonine 643. The Cytoplasmic portion of the chain corresponds to histidine 644 to leucine 862. The Box 1 motif signature appears at cysteine 662 to alanine 670. Positions asparagine 725–alanine 755 are disordered. The span at glutamine 728 to methionine 744 shows a compositional bias: basic and acidic residues. A required for STAT4 binding region spans residues threonine 796 to leucine 801. Tyrosine 800 carries the post-translational modification Phosphotyrosine.

It belongs to the type I cytokine receptor family. Type 2 subfamily. Heterodimer/heterooligomer; disulfide-linked. The functional high affinity IL12 receptor is composed of I12RB1 and IL12RB2. Il12RB2 binds JAK2 (via its N-terminal) through a membrane-proximal region of the cytoplasmic domain. Interaction, in vitro and in vivo, with SOCS3 (via its SH2 domain) inhibits the STAT4-mediated activation. Binds STAT4 through a membrane-distal C-terminal region. On IL12 binding, phosphorylated on C-terminal tyrosine residues by JAK2. Phosphorylation on Tyr-800 is required for STAT4 binding and activation, and for SOCS3 binding. Isoform 2 is expressed at similar levels in both naive and activated T-cells.

It is found in the membrane. In terms of biological role, receptor for interleukin-12. This subunit is the signaling component coupling to the JAK2/STAT4 pathway. Promotes the proliferation of T-cells as well as NK cells. Induces the promotion of T-cells towards the Th1 phenotype by strongly enhancing IFN-gamma production. This chain is Interleukin-12 receptor subunit beta-2 (IL12RB2), found in Homo sapiens (Human).